A 227-amino-acid chain; its full sequence is Phosphoglycolate phosphatase (227 aa).

The active-site Nucleophile is Asp11. The Mg(2+) site is built by Asp11, Asp13, and Asp176.

The protein belongs to the HAD-like hydrolase superfamily. CbbY/CbbZ/Gph/YieH family. Mg(2+) is required as a cofactor.

The enzyme catalyses 2-phosphoglycolate + H2O = glycolate + phosphate. It functions in the pathway organic acid metabolism; glycolate biosynthesis; glycolate from 2-phosphoglycolate: step 1/1. Its function is as follows. Specifically catalyzes the dephosphorylation of 2-phosphoglycolate. Is involved in the dissimilation of the intracellular 2-phosphoglycolate formed during the DNA repair of 3'-phosphoglycolate ends, a major class of DNA lesions induced by oxidative stress. The protein is Phosphoglycolate phosphatase of Aliivibrio fischeri (strain ATCC 700601 / ES114) (Vibrio fischeri).